The sequence spans 885 residues: DNA polymerase eta (885 aa).

One can recognise a UmuC domain in the interval 18–274 (VLLVDMDCFF…LPVGKIKGLG (257 aa)). Mg(2+) contacts are provided by D22 and M23. Positions 22 and 23 each coordinate Mn(2+). A 2'-deoxyribonucleoside 5'-triphosphate is bound at residue R70. Positions 125 and 126 each coordinate Mg(2+). The Mn(2+) site is built by D125 and E126. The active site involves E126. Disordered stretches follow at residues 599–653 (AIEA…DLYV) and 658–677 (VPPTLTEDELKPSTSKRKFD). Positions 608–618 (FEEDTEEETEL) are enriched in acidic residues. The segment covering 628–649 (EGQSSDAGQEQDPNTLNDSTGN) has biased composition (polar residues). The UBZ3-type 1 zinc finger occupies 701-737 (DILPTIKCDQCGANIPDEVKSLQTHRDHHFAQELSRT). Residues C708, C711, H725, and H729 each contribute to the Zn(2+) site. The tract at residues 722 to 783 (LQTHRDHHFA…YSTAPPSNSI (62 aa)) is disordered. The span at 739–748 (RSTEREERTQ) shows a compositional bias: basic and acidic residues. Over residues 766–780 (TAGSGSSSYSTAPPS) the composition is skewed to low complexity. Residues 798–832 (SDPQMNQCPECKAFIKCVDMPEHLDYHVARNLQRE) form a UBZ3-type 2 zinc finger. Residues C805, C808, H820, and H824 each coordinate Zn(2+). The interval 846-870 (NKEKISPVQPKKQSQKKLNSTISAS) is disordered.

This sequence belongs to the DNA polymerase type-Y family. Interacts (via C-terminus) with nopo. It depends on Mg(2+) as a cofactor. The cofactor is Mn(2+). In terms of processing, ubiquitination enhanced by nopo. As to expression, expressed in ovaries and testes.

Its subcellular location is the nucleus. The catalysed reaction is DNA(n) + a 2'-deoxyribonucleoside 5'-triphosphate = DNA(n+1) + diphosphate. With respect to regulation, the enzyme in complex with the DNA substrate binds a third divalent metal cation. This binding is essential for catalyzing the DNA synthesis. Its function is as follows. DNA polymerase specifically involved in the DNA repair by translesion synthesis (TLS). Plays an important role in translesion synthesis, where the normal high-fidelity DNA polymerases cannot proceed and DNA synthesis stalls. Inserts one or 2 nucleotide(s) opposite the lesion. During homologous recombination (HR) repair, has a overlapping role with the error-prone translesion polymerase PolZ1/DNApol-zeta to initiate repair synthesis that is completed by end joining or another polymerase that can bind and reinitiate synthesis. Particularly important for the repair of UV-induced pyrimidine dimers and for hydroxyurea (HU)-induced DNA damage. Although inserts the correct base, may cause base transitions and transversions depending upon the context. Forms a Schiff base with 5'-deoxyribose phosphate at abasic sites, but does not have any lyase activity, preventing the release of the 5'-deoxyribose phosphate (5'-dRP) residue. This covalent trapping of the enzyme by the 5'-dRP residue inhibits its DNA synthetic activity during base excision repair, thereby avoiding high incidence of mutagenesis. The sequence is that of DNA polymerase eta from Drosophila melanogaster (Fruit fly).